The following is a 234-amino-acid chain: Large ribosomal subunit protein uL1 (234 aa).

This sequence belongs to the universal ribosomal protein uL1 family. In terms of assembly, part of the 50S ribosomal subunit.

Binds directly to 23S rRNA. The L1 stalk is quite mobile in the ribosome, and is involved in E site tRNA release. Functionally, protein L1 is also a translational repressor protein, it controls the translation of the L11 operon by binding to its mRNA. This chain is Large ribosomal subunit protein uL1, found in Yersinia enterocolitica serotype O:8 / biotype 1B (strain NCTC 13174 / 8081).